Here is a 404-residue protein sequence, read N- to C-terminus: Probable tRNA sulfurtransferase (404 aa).

The THUMP domain maps to 60–165 (QPVAESLKQI…EEAAYISYET (106 aa)). Residues 183–184 (ML), 208–209 (HF), R265, G287, and Q296 each bind ATP.

The protein belongs to the ThiI family.

The protein resides in the cytoplasm. It catalyses the reaction [ThiI sulfur-carrier protein]-S-sulfanyl-L-cysteine + a uridine in tRNA + 2 reduced [2Fe-2S]-[ferredoxin] + ATP + H(+) = [ThiI sulfur-carrier protein]-L-cysteine + a 4-thiouridine in tRNA + 2 oxidized [2Fe-2S]-[ferredoxin] + AMP + diphosphate. The catalysed reaction is [ThiS sulfur-carrier protein]-C-terminal Gly-Gly-AMP + S-sulfanyl-L-cysteinyl-[cysteine desulfurase] + AH2 = [ThiS sulfur-carrier protein]-C-terminal-Gly-aminoethanethioate + L-cysteinyl-[cysteine desulfurase] + A + AMP + 2 H(+). It participates in cofactor biosynthesis; thiamine diphosphate biosynthesis. Catalyzes the ATP-dependent transfer of a sulfur to tRNA to produce 4-thiouridine in position 8 of tRNAs, which functions as a near-UV photosensor. Also catalyzes the transfer of sulfur to the sulfur carrier protein ThiS, forming ThiS-thiocarboxylate. This is a step in the synthesis of thiazole, in the thiamine biosynthesis pathway. The sulfur is donated as persulfide by IscS. This Streptococcus sanguinis (strain SK36) protein is Probable tRNA sulfurtransferase.